The chain runs to 71 residues: Small ribosomal subunit protein bS21 (71 aa).

It belongs to the bacterial ribosomal protein bS21 family.

The protein is Small ribosomal subunit protein bS21 of Vesicomyosocius okutanii subsp. Calyptogena okutanii (strain HA).